The following is a 451-amino-acid chain: 3-phosphoshikimate 1-carboxyvinyltransferase (451 aa).

Positions 38, 39, and 43 each coordinate 3-phosphoshikimate. Lys-38 serves as a coordination point for phosphoenolpyruvate. Phosphoenolpyruvate-binding residues include Gly-111 and Arg-140. Residues Ser-185, Gln-187, Asp-335, and Lys-362 each coordinate 3-phosphoshikimate. A phosphoenolpyruvate-binding site is contributed by Gln-187. Asp-335 (proton acceptor) is an active-site residue. Phosphoenolpyruvate contacts are provided by Arg-366 and Arg-408.

It belongs to the EPSP synthase family. Monomer.

The protein localises to the cytoplasm. It carries out the reaction 3-phosphoshikimate + phosphoenolpyruvate = 5-O-(1-carboxyvinyl)-3-phosphoshikimate + phosphate. The protein operates within metabolic intermediate biosynthesis; chorismate biosynthesis; chorismate from D-erythrose 4-phosphate and phosphoenolpyruvate: step 6/7. In terms of biological role, catalyzes the transfer of the enolpyruvyl moiety of phosphoenolpyruvate (PEP) to the 5-hydroxyl of shikimate-3-phosphate (S3P) to produce enolpyruvyl shikimate-3-phosphate and inorganic phosphate. The sequence is that of 3-phosphoshikimate 1-carboxyvinyltransferase from Crocosphaera subtropica (strain ATCC 51142 / BH68) (Cyanothece sp. (strain ATCC 51142)).